We begin with the raw amino-acid sequence, 275 residues long: ATP synthase subunit delta (275 aa).

It belongs to the ATPase delta chain family. F-type ATPases have 2 components, F(1) - the catalytic core - and F(0) - the membrane proton channel. F(1) has five subunits: alpha(3), beta(3), gamma(1), delta(1), epsilon(1). F(0) has three main subunits: a(1), b(2) and c(10-14). The alpha and beta chains form an alternating ring which encloses part of the gamma chain. F(1) is attached to F(0) by a central stalk formed by the gamma and epsilon chains, while a peripheral stalk is formed by the delta and b chains.

Its subcellular location is the cell membrane. In terms of biological role, f(1)F(0) ATP synthase produces ATP from ADP in the presence of a proton or sodium gradient. F-type ATPases consist of two structural domains, F(1) containing the extramembraneous catalytic core and F(0) containing the membrane proton channel, linked together by a central stalk and a peripheral stalk. During catalysis, ATP synthesis in the catalytic domain of F(1) is coupled via a rotary mechanism of the central stalk subunits to proton translocation. This protein is part of the stalk that links CF(0) to CF(1). It either transmits conformational changes from CF(0) to CF(1) or is implicated in proton conduction. The sequence is that of ATP synthase subunit delta from Bifidobacterium adolescentis (strain ATCC 15703 / DSM 20083 / NCTC 11814 / E194a).